Here is a 604-residue protein sequence, read N- to C-terminus: Aspartate--tRNA(Asp/Asn) ligase (604 aa).

L-aspartate is bound at residue Glu-175. Residues 199–202 are aspartate; that stretch reads QQFK. L-aspartate contacts are provided by Arg-221 and His-456. An ATP-binding site is contributed by 221-223; that stretch reads RDE. Glu-496 serves as a coordination point for ATP. Arg-503 lines the L-aspartate pocket. 548-551 provides a ligand contact to ATP; the sequence is GVDR.

Belongs to the class-II aminoacyl-tRNA synthetase family. Type 1 subfamily. In terms of assembly, homodimer.

It is found in the cytoplasm. It catalyses the reaction tRNA(Asx) + L-aspartate + ATP = L-aspartyl-tRNA(Asx) + AMP + diphosphate. In terms of biological role, aspartyl-tRNA synthetase with relaxed tRNA specificity since it is able to aspartylate not only its cognate tRNA(Asp) but also tRNA(Asn). Reaction proceeds in two steps: L-aspartate is first activated by ATP to form Asp-AMP and then transferred to the acceptor end of tRNA(Asp/Asn). The polypeptide is Aspartate--tRNA(Asp/Asn) ligase (Methylorubrum populi (strain ATCC BAA-705 / NCIMB 13946 / BJ001) (Methylobacterium populi)).